A 199-amino-acid chain; its full sequence is Probable chemoreceptor glutamine deamidase CheD (199 aa).

Belongs to the CheD family.

The enzyme catalyses L-glutaminyl-[protein] + H2O = L-glutamyl-[protein] + NH4(+). Probably deamidates glutamine residues to glutamate on methyl-accepting chemotaxis receptors (MCPs), playing an important role in chemotaxis. This Cereibacter sphaeroides (Rhodobacter sphaeroides) protein is Probable chemoreceptor glutamine deamidase CheD.